The following is a 448-amino-acid chain: Ribulose bisphosphate carboxylase large chain (448 aa).

Residues 1–2 constitute a propeptide that is removed on maturation; that stretch reads MS. The residue at position 3 (P3) is an N-acetylproline. An N6,N6,N6-trimethyllysine modification is found at K14. Substrate is bound by residues N122 and T172. K174 (proton acceptor) is an active-site residue. K176 contributes to the substrate binding site. Residues K200, D202, and E203 each coordinate Mg(2+). An N6-carboxylysine modification is found at K200. The active-site Proton acceptor is H293. 3 residues coordinate substrate: R294, H326, and S378.

This sequence belongs to the RuBisCO large chain family. Type I subfamily. In terms of assembly, heterohexadecamer of 8 large chains and 8 small chains; disulfide-linked. The disulfide link is formed within the large subunit homodimers. Requires Mg(2+) as cofactor. Post-translationally, the disulfide bond which can form in the large chain dimeric partners within the hexadecamer appears to be associated with oxidative stress and protein turnover.

The protein localises to the plastid. Its subcellular location is the chloroplast. The enzyme catalyses 2 (2R)-3-phosphoglycerate + 2 H(+) = D-ribulose 1,5-bisphosphate + CO2 + H2O. The catalysed reaction is D-ribulose 1,5-bisphosphate + O2 = 2-phosphoglycolate + (2R)-3-phosphoglycerate + 2 H(+). Its function is as follows. RuBisCO catalyzes two reactions: the carboxylation of D-ribulose 1,5-bisphosphate, the primary event in carbon dioxide fixation, as well as the oxidative fragmentation of the pentose substrate in the photorespiration process. Both reactions occur simultaneously and in competition at the same active site. This chain is Ribulose bisphosphate carboxylase large chain, found in Dichapetalum crassifolium.